A 97-amino-acid chain; its full sequence is Co-chaperonin GroES (97 aa).

This sequence belongs to the GroES chaperonin family. Heptamer of 7 subunits arranged in a ring. Interacts with the chaperonin GroEL.

The protein localises to the cytoplasm. Together with the chaperonin GroEL, plays an essential role in assisting protein folding. The GroEL-GroES system forms a nano-cage that allows encapsulation of the non-native substrate proteins and provides a physical environment optimized to promote and accelerate protein folding. GroES binds to the apical surface of the GroEL ring, thereby capping the opening of the GroEL channel. The chain is Co-chaperonin GroES from Buchnera aphidicola subsp. Tetraneura caerulescens.